The chain runs to 309 residues: Porphobilinogen deaminase (309 aa).

Cys241 is subject to S-(dipyrrolylmethanemethyl)cysteine.

The protein belongs to the HMBS family. As to quaternary structure, monomer. The cofactor is dipyrromethane.

It catalyses the reaction 4 porphobilinogen + H2O = hydroxymethylbilane + 4 NH4(+). It participates in porphyrin-containing compound metabolism; protoporphyrin-IX biosynthesis; coproporphyrinogen-III from 5-aminolevulinate: step 2/4. In terms of biological role, tetrapolymerization of the monopyrrole PBG into the hydroxymethylbilane pre-uroporphyrinogen in several discrete steps. This is Porphobilinogen deaminase from Campylobacter concisus (strain 13826).